The sequence spans 362 residues: Putative F-box protein At3g25750 (362 aa).

Positions 4-52 (TEWSDLPEELLDLIANRYSSNIDVLRIRSTCKSWRSAVAMSKERLQFRF) constitute an F-box domain.

This is Putative F-box protein At3g25750 from Arabidopsis thaliana (Mouse-ear cress).